The following is a 265-amino-acid chain: Indole-3-glycerol phosphate synthase (265 aa).

It belongs to the TrpC family.

It catalyses the reaction 1-(2-carboxyphenylamino)-1-deoxy-D-ribulose 5-phosphate + H(+) = (1S,2R)-1-C-(indol-3-yl)glycerol 3-phosphate + CO2 + H2O. It functions in the pathway amino-acid biosynthesis; L-tryptophan biosynthesis; L-tryptophan from chorismate: step 4/5. The protein is Indole-3-glycerol phosphate synthase of Xanthomonas oryzae pv. oryzae (strain MAFF 311018).